Here is an 83-residue protein sequence, read N- to C-terminus: Turripeptide Lol11.2 (83 aa).

Residues 1–27 (MARLMMTVGCLIFIVVLLDMMVPVSNT) form the signal peptide.

The protein belongs to the conopeptide I2-like superfamily. Contains 4 disulfide bonds. As to expression, expressed by the venom duct.

The protein resides in the secreted. Functionally, acts as a neurotoxin by inhibiting voltage-gated potassium channels (Kv). In Iotyrris olangoensis (Sea snail), this protein is Turripeptide Lol11.2.